Consider the following 438-residue polypeptide: MSNSTQHWIAQRGTALQGSLTIPGDKSVSHRAVMFAALADGISKIDGFLEGEDTRSTAAIFAQLGVRIETPSASQRIVHGVGVDGLQPPQGPLDCGNAGTGMRLLAGVLAAQRFDSVLVGDASLSKRPMRRVTGPLAQMGARIETESDGTPPLRVHGGQALQGITFASPVASAQVKSAVLLAGLYATGETSVSEPHPTRDYTERMLSAFGVEIAFSPGQARLRGGQRLRATDIAVPADFSSAAFFIVAASIIPGSGVTLRAVGLNPRRTGLLAALRLMGADIVEDNHAEHGGEPVADLRVRYAPLRGAQIPEALVPDMIDEFPALFVAAAAARGDTVVSGAAELRVKESDRLAAMATGLRALGIVVDETPDGATIHGGTLGSGVIESHGDHRIAMAFAIAGQLSTGTVQVNDVANVATSFPGFDSLAQGAGFGLSARP.

The 3-phosphoshikimate site is built by Lys26, Ser27, and Arg31. Lys26 provides a ligand contact to phosphoenolpyruvate. Phosphoenolpyruvate contacts are provided by Gly99 and Arg127. 3-phosphoshikimate contacts are provided by Ser172, Gln174, Asp320, and Lys347. Gln174 contributes to the phosphoenolpyruvate binding site. Asp320 acts as the Proton acceptor in catalysis. Residues Arg351 and Arg392 each contribute to the phosphoenolpyruvate site.

It belongs to the EPSP synthase family. As to quaternary structure, monomer.

It is found in the cytoplasm. The enzyme catalyses 3-phosphoshikimate + phosphoenolpyruvate = 5-O-(1-carboxyvinyl)-3-phosphoshikimate + phosphate. It participates in metabolic intermediate biosynthesis; chorismate biosynthesis; chorismate from D-erythrose 4-phosphate and phosphoenolpyruvate: step 6/7. Catalyzes the transfer of the enolpyruvyl moiety of phosphoenolpyruvate (PEP) to the 5-hydroxyl of shikimate-3-phosphate (S3P) to produce enolpyruvyl shikimate-3-phosphate and inorganic phosphate. In Xanthomonas campestris pv. campestris (strain 8004), this protein is 3-phosphoshikimate 1-carboxyvinyltransferase.